We begin with the raw amino-acid sequence, 297 residues long: Aspartate carbamoyltransferase catalytic subunit (297 aa).

The carbamoyl phosphate site is built by R49 and T50. K77 contacts L-aspartate. Positions 99, 129, and 132 each coordinate carbamoyl phosphate. 2 residues coordinate L-aspartate: R162 and R215. Residues G256 and P257 each contribute to the carbamoyl phosphate site.

This sequence belongs to the aspartate/ornithine carbamoyltransferase superfamily. ATCase family. Heterododecamer (2C3:3R2) of six catalytic PyrB chains organized as two trimers (C3), and six regulatory PyrI chains organized as three dimers (R2).

It carries out the reaction carbamoyl phosphate + L-aspartate = N-carbamoyl-L-aspartate + phosphate + H(+). It participates in pyrimidine metabolism; UMP biosynthesis via de novo pathway; (S)-dihydroorotate from bicarbonate: step 2/3. Functionally, catalyzes the condensation of carbamoyl phosphate and aspartate to form carbamoyl aspartate and inorganic phosphate, the committed step in the de novo pyrimidine nucleotide biosynthesis pathway. This chain is Aspartate carbamoyltransferase catalytic subunit, found in Legionella pneumophila (strain Corby).